The primary structure comprises 457 residues: Multidrug resistance protein MdtK (457 aa).

12 helical membrane passes run 11-31, 53-73, 93-113, 127-147, 160-180, 189-209, 243-263, 276-296, 314-334, 350-370, 387-407, and 418-438; these read LLAL…MGFV, IWLP…PVIA, WLAG…GYII, AVGY…FQVA, GMVM…IFIY, GGVG…LAMV, LPIA…ALLV, IALN…AAVT, AART…IFTV, VVTL…SDSI, IFYI…YILA, and PAGF…MMML.

This sequence belongs to the multi antimicrobial extrusion (MATE) (TC 2.A.66.1) family. MdtK subfamily.

The protein localises to the cell inner membrane. In terms of biological role, multidrug efflux pump that functions probably as a Na(+)/drug antiporter. The sequence is that of Multidrug resistance protein MdtK from Escherichia coli O127:H6 (strain E2348/69 / EPEC).